The chain runs to 317 residues: Ubiquinone biosynthesis protein COQ9-A, mitochondrial (317 aa).

The transit peptide at 1–46 (MAASVTRVLKGAGGRQLLLMVARRRPVLMQPFLLMPRKFWVSSALR) directs the protein to the mitochondrion. A disordered region spans residues 50–97 (QRQPPFSASSTHAETQGHAEEQYQQKQPPPRYTDQAGEESEGYESEEQ). The span at 53–63 (PPFSASSTHAE) shows a compositional bias: polar residues. Positions 85-96 (AGEESEGYESEE) are enriched in acidic residues. R243 provides a ligand contact to a 1,2-diacylglycero-3-phosphoethanolamine.

It belongs to the COQ9 family. Homodimer. Heterodimer; two heterodimers of COQ7:COQ9 come together on the same side of the lipid pseudo-bilayer and form a curved tetramer with a hydrophobic surface suitable for membrane interaction. These two tetramers assemble into a soluble octamer with a pseudo-bilayer of lipids captured within. Interacts with COQ7; this interaction allows ubiquinone (CoQ) isoprene intermediates presentation to COQ7 and facilitates the COQ7-mediated hydroxylase step.

It localises to the mitochondrion. It functions in the pathway cofactor biosynthesis; ubiquinone biosynthesis. In terms of biological role, membrane-associated protein that warps the membrane surface to access and bind aromatic isoprenes with high specificity, including ubiquinone (CoQ) isoprene intermediates and presents them directly to COQ7, therefore facilitating the COQ7-mediated hydroxylase step. Participates in the biosynthesis of coenzyme Q, also named ubiquinone, an essential lipid-soluble electron transporter for aerobic cellular respiration. In Xenopus laevis (African clawed frog), this protein is Ubiquinone biosynthesis protein COQ9-A, mitochondrial (coq9-a).